The chain runs to 221 residues: Transmembrane emp24 domain-containing protein 3 (221 aa).

The first 30 residues, 1 to 30 (MGNEVPRASSFQMLMLLLLLLLLRAERLRG), serve as a signal peptide directing secretion. Residues 31–184 (AELTFELPDN…RAEDLNSRVS (154 aa)) lie on the Lumenal side of the membrane. The GOLD domain maps to 42–124 (KQCFHEEVEQ…HKTVYFDFQV (83 aa)). Position 103 is a dimethylated arginine (Arg103). Residues 185–205 (YWSVGETIALFVVSFSQVLLL) traverse the membrane as a helical segment. Residues 206-221 (KSFFTEKRPINRAVHS) are Cytoplasmic-facing. The COPII vesicle coat-binding motif lies at 208 to 209 (FF). Residues 208–221 (FFTEKRPINRAVHS) carry the COPI vesicle coat-binding motif.

It belongs to the EMP24/GP25L family. In terms of assembly, monomer in endoplasmic reticulum, endoplasmic reticulum-Golgi intermediate compartment and cis-Golgi network. Interacts (via C-terminus) with COPG1; the interaction involves dimeric TMED3; however, there are conflicting reports on the interaction. Interacts with GORASP1 and GORASP2.

It is found in the endoplasmic reticulum-Golgi intermediate compartment membrane. The protein localises to the golgi apparatus. Its subcellular location is the cis-Golgi network membrane. It localises to the golgi stack membrane. The protein resides in the endoplasmic reticulum membrane. It is found in the cytoplasmic vesicle. The protein localises to the COPI-coated vesicle membrane. Potential role in vesicular protein trafficking, mainly in the early secretory pathway. Contributes to the coupled localization of TMED2 and TMED10 in the cis-Golgi network. The polypeptide is Transmembrane emp24 domain-containing protein 3 (Tmed3) (Rattus norvegicus (Rat)).